Here is a 606-residue protein sequence, read N- to C-terminus: NADH-ubiquinone oxidoreductase chain 5 (606 aa).

Met1 carries the post-translational modification N-formylmethionine. 15 consecutive transmembrane segments (helical) span residues 4 to 24, 43 to 63, 87 to 107, 117 to 137, 140 to 160, 171 to 191, 213 to 233, 241 to 261, 273 to 293, 310 to 330, 366 to 386, 413 to 433, 457 to 477, 482 to 502, and 582 to 602; these read FSSLSLVTLLLLTMPIMMMSF, AFITSMIPTMMFIHSGQELII, MMFIPVALFVTWSIMEFSMWY, FFKYLLLFLITMLILVTANNL, LFIGWEGVGIMSFLLIGWWYG, AILYNRIGDIGFILAMAWFLT, LIGLALAATGKSAQFGLHPWL, TPVSALLHSSTMVVAGIFLLI, IQSITLCLGAITTLFTAMCAL, LGLMMVTIGINQPYLAFLHIC, MPFTTTALIVGSLALTGMPFL, LIATSFTAIYSTRIIFFALLG, LLIGSLFAGYIISNNIPPTTI, MPYYLKTTALIVTILGFILAL, and GLIKLYFLSFLITILISMILF.

Core subunit of respiratory chain NADH dehydrogenase (Complex I) which is composed of 45 different subunits.

The protein localises to the mitochondrion inner membrane. The enzyme catalyses a ubiquinone + NADH + 5 H(+)(in) = a ubiquinol + NAD(+) + 4 H(+)(out). Core subunit of the mitochondrial membrane respiratory chain NADH dehydrogenase (Complex I) which catalyzes electron transfer from NADH through the respiratory chain, using ubiquinone as an electron acceptor. Essential for the catalytic activity and assembly of complex I. This Bos taurus (Bovine) protein is NADH-ubiquinone oxidoreductase chain 5 (MT-ND5).